The sequence spans 229 residues: Putative N-acetylmannosamine-6-phosphate 2-epimerase (229 aa).

Belongs to the NanE family.

It catalyses the reaction an N-acyl-D-glucosamine 6-phosphate = an N-acyl-D-mannosamine 6-phosphate. It participates in amino-sugar metabolism; N-acetylneuraminate degradation; D-fructose 6-phosphate from N-acetylneuraminate: step 3/5. Functionally, converts N-acetylmannosamine-6-phosphate (ManNAc-6-P) to N-acetylglucosamine-6-phosphate (GlcNAc-6-P). This chain is Putative N-acetylmannosamine-6-phosphate 2-epimerase, found in Escherichia fergusonii (strain ATCC 35469 / DSM 13698 / CCUG 18766 / IAM 14443 / JCM 21226 / LMG 7866 / NBRC 102419 / NCTC 12128 / CDC 0568-73).